The sequence spans 414 residues: Nuclear hormone receptor family member nhr-213 (414 aa).

The nuclear receptor DNA-binding region spans 21 to 99 (IVLCKVCALS…LGMTPENVQF (79 aa)). 2 consecutive NR C4-type zinc fingers follow at residues 24 to 44 (CKVC…CRAC) and 62 to 82 (CKKG…CRLC). Residues 162-414 (SAAKKMNSLE…DFSDPDIFDC (253 aa)) form the NR LBD domain.

The protein belongs to the nuclear hormone receptor family.

The protein resides in the nucleus. Orphan nuclear receptor. The chain is Nuclear hormone receptor family member nhr-213 (nhr-213) from Caenorhabditis elegans.